A 258-amino-acid polypeptide reads, in one-letter code: Indole-3-glycerol phosphate synthase (258 aa).

The protein belongs to the TrpC family.

It carries out the reaction 1-(2-carboxyphenylamino)-1-deoxy-D-ribulose 5-phosphate + H(+) = (1S,2R)-1-C-(indol-3-yl)glycerol 3-phosphate + CO2 + H2O. It participates in amino-acid biosynthesis; L-tryptophan biosynthesis; L-tryptophan from chorismate: step 4/5. The chain is Indole-3-glycerol phosphate synthase from Campylobacter jejuni subsp. jejuni serotype O:23/36 (strain 81-176).